The primary structure comprises 565 residues: NAD-dependent malic enzyme (565 aa).

Catalysis depends on tyrosine 104, which acts as the Proton donor. Arginine 157 serves as a coordination point for NAD(+). Residue lysine 175 is the Proton acceptor of the active site. Residues glutamate 246, aspartate 247, and aspartate 270 each contribute to the a divalent metal cation site. NAD(+) is bound by residues aspartate 270 and asparagine 418.

The protein belongs to the malic enzymes family. In terms of assembly, homotetramer. The cofactor is Mg(2+). It depends on Mn(2+) as a cofactor.

The catalysed reaction is (S)-malate + NAD(+) = pyruvate + CO2 + NADH. The enzyme catalyses oxaloacetate + H(+) = pyruvate + CO2. The protein is NAD-dependent malic enzyme of Shigella boydii serotype 18 (strain CDC 3083-94 / BS512).